Reading from the N-terminus, the 360-residue chain is Holliday junction branch migration complex subunit RuvB (360 aa).

The segment at 1–46 (MAIKRSGNSDRPAKNPSSTPGTNAPTLLSPTPTHQEKETSEEKIRP) is disordered. Residues 13–205 (AKNPSSTPGT…FGLIQRLRFY (193 aa)) form a large ATPase domain (RuvB-L) region. Polar residues predominate over residues 15–33 (NPSSTPGTNAPTLLSPTPT). A compositionally biased stretch (basic and acidic residues) spans 34 to 46 (HQEKETSEEKIRP). ATP-binding positions include isoleucine 44, arginine 45, glycine 86, lysine 89, threonine 90, threonine 91, 152 to 154 (EDY), arginine 195, tyrosine 205, and arginine 242. Position 90 (threonine 90) interacts with Mg(2+). A small ATPAse domain (RuvB-S) region spans residues 206–276 (EVDELTLIVL…LASEALDIYQ (71 aa)). The interval 279 to 360 (KQGLDWIDRL…LTSEEQLSIF (82 aa)) is head domain (RuvB-H). 2 residues coordinate DNA: arginine 334 and arginine 339.

This sequence belongs to the RuvB family. Homohexamer. Forms an RuvA(8)-RuvB(12)-Holliday junction (HJ) complex. HJ DNA is sandwiched between 2 RuvA tetramers; dsDNA enters through RuvA and exits via RuvB. An RuvB hexamer assembles on each DNA strand where it exits the tetramer. Each RuvB hexamer is contacted by two RuvA subunits (via domain III) on 2 adjacent RuvB subunits; this complex drives branch migration. In the full resolvosome a probable DNA-RuvA(4)-RuvB(12)-RuvC(2) complex forms which resolves the HJ.

The protein resides in the cytoplasm. The enzyme catalyses ATP + H2O = ADP + phosphate + H(+). Functionally, the RuvA-RuvB-RuvC complex processes Holliday junction (HJ) DNA during genetic recombination and DNA repair, while the RuvA-RuvB complex plays an important role in the rescue of blocked DNA replication forks via replication fork reversal (RFR). RuvA specifically binds to HJ cruciform DNA, conferring on it an open structure. The RuvB hexamer acts as an ATP-dependent pump, pulling dsDNA into and through the RuvAB complex. RuvB forms 2 homohexamers on either side of HJ DNA bound by 1 or 2 RuvA tetramers; 4 subunits per hexamer contact DNA at a time. Coordinated motions by a converter formed by DNA-disengaged RuvB subunits stimulates ATP hydrolysis and nucleotide exchange. Immobilization of the converter enables RuvB to convert the ATP-contained energy into a lever motion, pulling 2 nucleotides of DNA out of the RuvA tetramer per ATP hydrolyzed, thus driving DNA branch migration. The RuvB motors rotate together with the DNA substrate, which together with the progressing nucleotide cycle form the mechanistic basis for DNA recombination by continuous HJ branch migration. Branch migration allows RuvC to scan DNA until it finds its consensus sequence, where it cleaves and resolves cruciform DNA. The sequence is that of Holliday junction branch migration complex subunit RuvB from Rippkaea orientalis (strain PCC 8801 / RF-1) (Cyanothece sp. (strain PCC 8801)).